We begin with the raw amino-acid sequence, 342 residues long: Phosphate acyltransferase (342 aa).

It belongs to the PlsX family. As to quaternary structure, homodimer. Probably interacts with PlsY.

It localises to the cytoplasm. The catalysed reaction is a fatty acyl-[ACP] + phosphate = an acyl phosphate + holo-[ACP]. It participates in lipid metabolism; phospholipid metabolism. Catalyzes the reversible formation of acyl-phosphate (acyl-PO(4)) from acyl-[acyl-carrier-protein] (acyl-ACP). This enzyme utilizes acyl-ACP as fatty acyl donor, but not acyl-CoA. This chain is Phosphate acyltransferase, found in Legionella pneumophila (strain Corby).